Here is a 288-residue protein sequence, read N- to C-terminus: Alpha/beta hydrolase domain-containing protein 17B (288 aa).

Residues S170, D235, and H264 each act as charge relay system in the active site.

The protein belongs to the AB hydrolase superfamily. ABHD17 family. Post-translationally, palmitoylated on cysteine residues located in a cysteine cluster at the N-terminus which promotes membrane localization.

The protein localises to the cell membrane. Its subcellular location is the recycling endosome membrane. It is found in the cell projection. It localises to the dendritic spine. The protein resides in the postsynaptic density membrane. The enzyme catalyses S-hexadecanoyl-L-cysteinyl-[protein] + H2O = L-cysteinyl-[protein] + hexadecanoate + H(+). In terms of biological role, hydrolyzes fatty acids from S-acylated cysteine residues in proteins. Has depalmitoylating activity towards NRAS. This is Alpha/beta hydrolase domain-containing protein 17B from Gallus gallus (Chicken).